The following is a 64-amino-acid chain: Large ribosomal subunit protein bL32 (64 aa).

Residues 1–20 (MALPKYKTSRANTHSRRANW) form a disordered region.

Belongs to the bacterial ribosomal protein bL32 family.

In Bifidobacterium adolescentis (strain ATCC 15703 / DSM 20083 / NCTC 11814 / E194a), this protein is Large ribosomal subunit protein bL32.